The sequence spans 429 residues: Glucose-1-phosphate adenylyltransferase (429 aa).

Residues Gly-162, 177–178 (EK), and Ser-209 each bind alpha-D-glucose 1-phosphate.

Belongs to the bacterial/plant glucose-1-phosphate adenylyltransferase family. Homotetramer.

The catalysed reaction is alpha-D-glucose 1-phosphate + ATP + H(+) = ADP-alpha-D-glucose + diphosphate. Its pathway is glycan biosynthesis; glycogen biosynthesis. Involved in the biosynthesis of ADP-glucose, a building block required for the elongation reactions to produce glycogen. Catalyzes the reaction between ATP and alpha-D-glucose 1-phosphate (G1P) to produce pyrophosphate and ADP-Glc. The sequence is that of Glucose-1-phosphate adenylyltransferase from Nostoc punctiforme (strain ATCC 29133 / PCC 73102).